A 448-amino-acid polypeptide reads, in one-letter code: Asparagine--tRNA ligase (448 aa).

This sequence belongs to the class-II aminoacyl-tRNA synthetase family. As to quaternary structure, homodimer.

It localises to the cytoplasm. It carries out the reaction tRNA(Asn) + L-asparagine + ATP = L-asparaginyl-tRNA(Asn) + AMP + diphosphate + H(+). The protein is Asparagine--tRNA ligase of Streptococcus thermophilus (strain CNRZ 1066).